The chain runs to 95 residues: Small ribosomal subunit protein uS14 (95 aa).

This sequence belongs to the universal ribosomal protein uS14 family. As to quaternary structure, part of the 30S ribosomal subunit. Contacts proteins S3 and S10.

Its function is as follows. Binds 16S rRNA, required for the assembly of 30S particles and may also be responsible for determining the conformation of the 16S rRNA at the A site. The polypeptide is Small ribosomal subunit protein uS14 (Fusobacterium nucleatum subsp. nucleatum (strain ATCC 25586 / DSM 15643 / BCRC 10681 / CIP 101130 / JCM 8532 / KCTC 2640 / LMG 13131 / VPI 4355)).